A 72-amino-acid chain; its full sequence is UPF0729 protein C18orf32 homolog (72 aa).

The tract at residues 1–33 is necessary for its localzation to the endoplasmic reticulum and lipid droplets; sequence MVCIPCIVIPVLLWIFKKFLEPYIYPVVSRIWP. The disordered stretch occupies residues 45-72; sequence TGKVDCKGADTNGFSTKGPTEVSDKKKD.

Belongs to the UPF0729 family. Interacts with DERL1 and AMFR. In terms of processing, undergoes ER-associated degradation (ERAD).

It is found in the endoplasmic reticulum. The protein localises to the lipid droplet. Its function is as follows. May activate the NF-kappa-B signaling pathway. The polypeptide is UPF0729 protein C18orf32 homolog (Rattus norvegicus (Rat)).